Reading from the N-terminus, the 2799-residue chain is MISETFCKSSADEGYTSFPIRPTSIDRPVLDKTSQCEFALFPHFCNIHTLSTLSNASWALIAGQLTNSTKIILGVPSSGESTPVHDIESRTALQPAAVPLLIDWRPEQSVADYLNHVQSRIADATALDGASSQLLAGGFPGDNYARHIQTLIVVETIETSPGSINGTQKLQRLEYDHKKNSACATLVIEMRLQKTGIMADASFDTRALGPWLVYNLLKRLEYVMKQLCCVSSGHVLADIDMITPEDLEQIWQCNDPIPAPVERCMHDVVQERCRLQPNALAVDAWDGRLTYRELDQLSDRLAGRLVNQGIEPDMLVPLCFHKSMWMPVTMMGVLKAGGGFVLLEPSFPEQRLRAMVEEIKPSIILASSTTRALSLRLLDNVIQVDSELFNYPNPSANGFPQLQPSSTAMFGVFTSGSTGKPKGAILTHANYCSAFTYQLDLLGFKKDSRVFDFASYAFDVSVHNVFASLASGACLCIASEEERRQDICKSISDMRATIVHLTPSVTRLIQPEKVPLLQTVIFTGEPLSVEDVKPWWGKVNIVNEYGPAECTINTINSNPSSPEEATMIGKGVGVAVWIVDPNDHDLLAPIGSVGELLIEGALVGRGYINETERNAAAFIENPKWLLHGRPGRPGRQGRLYKTGDLVKYGEDGNLIFVGRKDTQVKIYGQRVDLREVEHWIQSCGHGAGQVVAEMIAPRADDPAPALVAFLQIGHTGLGGPLCPNSTEATLRPVPDEVEAKLAKHLPSYMVPKMFIAMSQFPMTATGKTDRRQLRKIGSSFSLEQLAEVRAKARGRLERQPLTGMERLLCDVWSKVLRLERRTIGPESNFFHLGGDSIAAMKSVGEARKSGIKVAVADVFRHPSLQDLSRQSRYIEDNSLDHIEPFDLLGEVFNRVSFLKDASHQYGIDPSAIYDAYPCTPLQEGLMSLTAKRPGDYIEQMILELGGDVEVDNLWVAWDHVARVTPILRTRLVHHNDLGLVQLVLEENTSRTDATGLDEYLDADRRRSMSLGEPLSRYGLVRNETGEPKWFVWSIHHAIYDGWSVQLILDAAYRAYRGEKIQQGPQFQVFIKYVQQQRHHNQGRVVEYWQKTLAGFKGTQFPSVVPSVQQPVADTSLCCCIPNPQNSRVGVTTSMLIRAAWALVVGTMANSEDVVFGSTLYGRNASVAGLEELAAPTIATVPVRVRFSRNQTVSEYLEAIQQEATAMIPFEQTGLQEIAQISDSCQMACQFQTHLVIQPEEHAQGKGPLGTWQIRSQEQWFSTYSLTLELWLGTDHITASAMFDSRIIESWVVRSMLQRLEGVMYQLNYATSSQLLGDITILTTEDLEQIWEWNKTIPTPVNRCVHEIIHDKVQARPNAPAICAWDGELTYNELNRLADQLSGRLTELGVGPHLLVPLCFEKSLWTAVAILGVIKSGGGFVLLDASLPEQRLRSIMQQVKGDLVITCPSQQALCSRLGAQTITLSWGFFSTLRGYEAGLRIQEYSPSSILYAVFTSGSTGTPKGVLITHGNMASALHYQSEAMGLSEDSRLYDFASYSFDVAISNIFTVLAAGGCLCVPSEEHRKNNLEGSIISLRANALDLTPSIAQLLSSARLLNVRSLTLGGESVLATAAEPWFGKLQMRNAYGPSECTPTCIINHNPSSPEQATEIGNGVGVVTWVVDPSNHEVLLPPGCTGELLLEGPLVGPGYLGDGEKTAAAFIHDPVWLTKGTHNRTGRHGRLYKTGDLVKYNKNGTLSFVRRKDTQIKLRGQRVELGEVEHVLRSHSCVVDAVAVSQRDDKLGAWIAGFVTIRADGQKKHQGDGEYEQQQIQSWEDQFDGETYTSIEAMPREAIGRDFIGWTSMYDGSDIDKGDMNEWLDDTINTILDGGPVGHVLEIGCGSGMMLFNLANKGLQSYIGIEPSRRAVDATTRIANSIPNLKERIRIVKGTGEDLQRLGTRLGTPISPDLVVINSVIQYFPSQEYLVKLIQDIFKLGSVKTIFFGDVRSHALHKEFLALRALQILGETASREEIGQVLSNLHRAEPELLLDPEFFTSLPARLPGHIAHVEILPKKMEATNELSSFRYGAVVHLDLEHRQTPDIDPKSWVSYTSRGLDCKSLLALLKNRPEAADTIAICDIPHSKTVFATELIDDLENGASEARHSRHWAQFICQKAKQRSSLSAIDLVKLAEEAGYRVEISWARQYSQRGGLDAVFHRCIADNDARRVLFRFPTDHTDRPYHFLSSKPLRRQAEIKIQKELEAKLRCQLPSHMIPQTITILDRMPANHNGKVDRQILADSVQRQWTGRGRRRSPTTDMEKELQRIWSHVLNISPDSIGLDDGFVHLGGNSLNAMKIVHMARQAGIDLTVADMFRYSETTIERLLLDCCCDDTCGKGTSADAVNWTYLMAAIDERDAYLAAIQAGEKSHLVNGDMQADSDNLLTVLLTGANGFIGTQILRQLLEHGRVDRVICIVRGESPSVARQRTIEAAKKALWWTEFHQEMLEVWPGDLSLPRLGLDEVKWRLLAEGKAANIIIHNGASVNFVKSYAALEAANVDSTVEMVSVVTRNPSMRLIYVSSARSQDPMEEEEEDMAQALTKNPNGYNQTKFIAEALVRRAALRTSPRQDQFMVVSPGLVVGTPTEGVANADDWLWRMAAACIRVGVYNVDNSDKWVPLCDVSTTATVIIEAALGHPSTSRTVTQVRGGLTMGEFWETLAAAGYPLVGTRVAECTAAIQEDILANGENHPLGALADMLQDLEDTTNVQWADSWRKNGLCSPARLKAALCKSAEFLSRVEFLPSPNLVHGRVVQETNMRAFTRSGF.

The adenylation 1 stretch occupies residues 270–666; that stretch reads QERCRLQPNA…VGRKDTQVKI (397 aa). Residues 799–875 form the Carrier 1 domain; the sequence is QPLTGMERLL…DLSRQSRYIE (77 aa). Ser-836 carries the post-translational modification O-(pantetheine 4'-phosphoryl)serine. Residues 914–1327 form a condensation region; it reads DAYPCTPLQE…ITILTTEDLE (414 aa). The segment at 1350–1743 is adenylation 2; that stretch reads DKVQARPNAP…TLSFVRRKDT (394 aa). A methylation (Met) domain region spans residues 1874–1970; sequence LEIGCGSGMM…EYLVKLIQDI (97 aa). A Carrier 2 domain is found at 2290 to 2368; it reads SPTTDMEKEL…RLLLDCCCDD (79 aa). Position 2327 is an O-(pantetheine 4'-phosphoryl)serine (Ser-2327). Residues 2420–2737 form a thiesterase (TE) domain region; sequence TVLLTGANGF…LADMLQDLED (318 aa).

The protein belongs to the NRP synthetase family. Requires pantetheine 4'-phosphate as cofactor.

The enzyme catalyses (S)-1-pyrroline-5-carboxylate + L-arginine + S-adenosyl-L-methionine + 2 ATP = peramine + 2 AMP + S-adenosyl-L-homocysteine + 2 diphosphate + H2O + 2 H(+). The protein operates within secondary metabolite biosynthesis. In terms of biological role, nonribosomal peptide synthetase; part of the gene cluster that mediates the biosynthesis of pyrrolopyrazines, secondary metabolites showing insecticidal activity. The single multifunctional NRPS ppzA is responsible for the biosynthesis of peramine. The condensation domain of ppzA is proposed to catalyze formation of a peptide bond between 1-pyrroline-5-carboxylate and arginine. The methylation domain of ppzA would catalyze the N-methylation of the alpha-amino group of arginine. The reductase domain is proposed to be responsible for reduction of the thioester and the cyclization to form an iminium ion resulting in release from the peptide synthetase. Deprotonation of this intermediate and oxidation of the pyrroline ring would give rise to peramine. This final oxidation to give the pyrrole functionality may be spontaneous. In Epichloe species that produce only peramine, the peramine synthetase gene is not localized in a gene cluster, in contrast to Metarhizium species that contain additional pyrrolopyrazine biosynthesis genes. The 2-oxoglutarate-Fe(II) type oxidoreductase ppzC hydroxylates peramine to yield the newly identified compound 8-hydroxyperamine whereas ppzD converts L-proline into trans-4-hydroxy-L-proline, a precursor of peramine biosynthesis. The protein is Peramine synthetase ppzA of Metarhizium majus (strain ARSEF 297).